The sequence spans 700 residues: MVYDPIRDCDVPAPHISAPPLSRSRSPPPPHRTPSASGSLRGLLNDSPPPREPPRAASVHEDAESHRPKLSNILNDAEPPRQRSMLPPQQPIHAELEHGRRTSAGSHAAQLARSPSMSLSPRSQNQSLPYPSSRPGSAAGSAHPFGYDPRQGTLSPVLSARRTSEDQPRPTSSSSASGRRYTEPASQTPAPAPLGSSAYRPRHTSTPGNPSSAYAPRFTPQPTTTPSSPSTSQHTPYTPHHSAPPRILHYNPHRQSAPSSVLRPIYPDEVAHLRQLAHANNPLRQKPAARRYSYSGGRAPEPTPTPRTSLPGENDHSYFPPQWDDRPSMPPSEVSYGGPPSSTPGAPPSGYSQYPPNWEAQTPGGNWNGERPGRLGKRRARDEEDDEYERNKRVVSGPVAGQAYSKKVTVVAEHYNSRPEVGVERREFSPIIGLKKFNNWIKSVLIGKFAYRPRGKVLDVGCGKGGDLNKWKQARIALYVGLDVADQSVQQAADRYRRMPKPGFDAFFYAHDCFSNPLSDVLSPELQIKDLYDNVTMQFCMHYAFENAAKARMMIENVSRYLRRGGIFIGTIPNAELLLQLPDRDEELRFGNSCYSIQFTERRHKGVYGHDYRFYLTDAVEDVPEYLVDWENFVSLASESGLRLVYKKAFHEILQEEKDSRDFGPLLGKMGVLNEYGESAMDADQWEAANLYMGFAFEKM.

2 stretches are compositionally biased toward basic and acidic residues: residues 1–10 and 52–67; these read MVYDPIRDCD and EPPR…ESHR. Disordered regions lie at residues 1-263 and 277-392; these read MVYD…SVLR and AHAN…ERNK. Polar residues predominate over residues 113–128; that stretch reads RSPSMSLSPRSQNQSL. Low complexity-rich tracts occupy residues 129–144 and 220–241; these read PYPS…SAHP and PQPT…TPHH. The mRNA cap 0 methyltransferase domain maps to 429-700; it reads SPIIGLKKFN…LYMGFAFEKM (272 aa). An mRNA-binding site is contributed by 438–439; it reads NN. Residues K442, G461, D483, D512, Q538, and Y543 each contribute to the S-adenosyl-L-methionine site.

The protein belongs to the class I-like SAM-binding methyltransferase superfamily. mRNA cap 0 methyltransferase family.

The protein localises to the nucleus. It carries out the reaction a 5'-end (5'-triphosphoguanosine)-ribonucleoside in mRNA + S-adenosyl-L-methionine = a 5'-end (N(7)-methyl 5'-triphosphoguanosine)-ribonucleoside in mRNA + S-adenosyl-L-homocysteine. Its function is as follows. Responsible for methylating the 5'-cap structure of mRNAs. The protein is mRNA cap guanine-N(7) methyltransferase (ABD1) of Cryptococcus neoformans var. neoformans serotype D (strain B-3501A) (Filobasidiella neoformans).